The chain runs to 955 residues: Glycine dehydrogenase (decarboxylating) (955 aa).

Position 702 is an N6-(pyridoxal phosphate)lysine (lysine 702).

This sequence belongs to the GcvP family. As to quaternary structure, the glycine cleavage system is composed of four proteins: P, T, L and H. It depends on pyridoxal 5'-phosphate as a cofactor.

The enzyme catalyses N(6)-[(R)-lipoyl]-L-lysyl-[glycine-cleavage complex H protein] + glycine + H(+) = N(6)-[(R)-S(8)-aminomethyldihydrolipoyl]-L-lysyl-[glycine-cleavage complex H protein] + CO2. The glycine cleavage system catalyzes the degradation of glycine. The P protein binds the alpha-amino group of glycine through its pyridoxal phosphate cofactor; CO(2) is released and the remaining methylamine moiety is then transferred to the lipoamide cofactor of the H protein. The chain is Glycine dehydrogenase (decarboxylating) from Stenotrophomonas maltophilia (strain K279a).